Reading from the N-terminus, the 258-residue chain is uncharacterized protein (258 aa).

7 helical membrane passes run Val8–Phe28, Val38–His58, Glu70–Glu90, Leu121–Ile141, Leu176–Leu196, Pro204–Tyr224, and His231–Val251.

It is found in the cell membrane. This is an uncharacterized protein from Bacillus subtilis (strain 168).